A 439-amino-acid chain; its full sequence is UDP-N-acetylglucosamine--N-acetylmuramyl-(pentapeptide) pyrophosphoryl-undecaprenol N-acetylglucosamine transferase (439 aa).

UDP-N-acetyl-alpha-D-glucosamine contacts are provided by residues 25-27, arginine 218, serine 248, and glutamine 362; that span reads TGG.

Belongs to the glycosyltransferase 28 family. MurG subfamily.

The protein localises to the cell membrane. It catalyses the reaction di-trans,octa-cis-undecaprenyl diphospho-N-acetyl-alpha-D-muramoyl-L-alanyl-D-glutamyl-meso-2,6-diaminopimeloyl-D-alanyl-D-alanine + UDP-N-acetyl-alpha-D-glucosamine = di-trans,octa-cis-undecaprenyl diphospho-[N-acetyl-alpha-D-glucosaminyl-(1-&gt;4)]-N-acetyl-alpha-D-muramoyl-L-alanyl-D-glutamyl-meso-2,6-diaminopimeloyl-D-alanyl-D-alanine + UDP + H(+). The protein operates within cell wall biogenesis; peptidoglycan biosynthesis. Functionally, cell wall formation. Catalyzes the transfer of a GlcNAc subunit on undecaprenyl-pyrophosphoryl-MurNAc-pentapeptide (lipid intermediate I) to form undecaprenyl-pyrophosphoryl-MurNAc-(pentapeptide)GlcNAc (lipid intermediate II). In Roseiflexus sp. (strain RS-1), this protein is UDP-N-acetylglucosamine--N-acetylmuramyl-(pentapeptide) pyrophosphoryl-undecaprenol N-acetylglucosamine transferase.